A 178-amino-acid chain; its full sequence is Large ribosomal subunit protein uL6 (178 aa).

The protein belongs to the universal ribosomal protein uL6 family. In terms of assembly, part of the 50S ribosomal subunit.

This protein binds to the 23S rRNA, and is important in its secondary structure. It is located near the subunit interface in the base of the L7/L12 stalk, and near the tRNA binding site of the peptidyltransferase center. This Lactococcus lactis subsp. cremoris (strain MG1363) protein is Large ribosomal subunit protein uL6.